Consider the following 385-residue polypeptide: 26S proteasome non-ATPase regulatory subunit 13 (385 aa).

A PCI domain is found at 176 to 347; it reads EFYKNALMYL…EIIHITWVTP (172 aa).

This sequence belongs to the proteasome subunit S11 family.

Its function is as follows. Acts as a regulatory subunit of the 26S proteasome which is involved in the ATP-dependent degradation of ubiquitinated proteins. The sequence is that of 26S proteasome non-ATPase regulatory subunit 13 (psmD13) from Dictyostelium discoideum (Social amoeba).